The primary structure comprises 554 residues: MGRNLGSAFRQELANLDKDPDSHKTAMSNLRSIVKDLDAKVVHVFVAQLSDVKEIGLESGGYTVSLFEDLARAHGVKIAPHIDIIMPAIIRTLSSSEGSLRVQQACSRAVAAMARYGIDPTTPEDKKTNVIHSLCKPLSDSLIDSQHQQHLALGSALCLKSLVDCDNWRSASSEMVNNVCQSLAVALEATSSEAKSHMALVMALSKHNPFTVEAYARLFVKSGLRILDLGVVEGDSQKRLLAIQMLNFLMKNLNPKSISSELELIYQEMEKYQKDQHYVKMAAHETMRQAERLICEADPMFDAENCKPRNSLSGSVKSTSSLREHDGSVYSRQDRSYVNDQDEYDVLFSGVASGRTLVSGSPLVTFGDNNQETGFVIESPRIGDQIQCSGVENGNIESVWFHQRNRSSEFNESVCSRTNRSRSSRRNTKKRQSGDICSKHHRHGFAQDPFTELLDNRQQLLQYSETSSSSSIYDTSGTTTPTNTTEDICEKPKTDLDSEAKLKTVETELDPRLGRSKGVLKLGLSVFSIAVAGFASFMWMYLQDDMMPPHLVPT.

The ARMADILLO-type fold stretch occupies residues 17 to 290 (DKDPDSHKTA…MAAHETMRQA (274 aa)). Disordered stretches follow at residues 306–332 (CKPRNSLSGSVKSTSSLREHDGSVYSR), 411–442 (NESVCSRTNRSRSSRRNTKKRQSGDICSKHHR), and 465–487 (ETSSSSSIYDTSGTTTPTNTTED). The segment covering 311-321 (SLSGSVKSTSS) has biased composition (low complexity). Residues 322 to 332 (LREHDGSVYSR) are compositionally biased toward basic and acidic residues. The segment covering 419-431 (NRSRSSRRNTKKR) has biased composition (basic residues). Low complexity predominate over residues 465–485 (ETSSSSSIYDTSGTTTPTNTT). One can recognise a KASH domain in the interval 509–554 (LDPRLGRSKGVLKLGLSVFSIAVAGFASFMWMYLQDDMMPPHLVPT). A helical membrane pass occupies residues 522 to 542 (LGLSVFSIAVAGFASFMWMYL). The Required for nuclear localization signature appears at 551–554 (LVPT).

In terms of assembly, interacts with SUN1 and SUN2. As to expression, expressed in epidermal cells, mesophyll cells, trichomes and root cells.

The protein resides in the nucleus membrane. In terms of biological role, plays a role in innate immunity against the oomycete pathogen A.arabidopsidis (Hpa). This Arabidopsis thaliana (Mouse-ear cress) protein is Protein SINE2.